We begin with the raw amino-acid sequence, 23 residues long: Glutamine synthetase (23 aa).

It belongs to the glutamine synthetase family. As to quaternary structure, oligomer of 12 subunits arranged in the form of two hexagons. Requires Mg(2+) as cofactor.

It localises to the cytoplasm. The catalysed reaction is L-glutamate + NH4(+) + ATP = L-glutamine + ADP + phosphate + H(+). Its activity is regulated as follows. The activity of this enzyme could be controlled by adenylation under conditions of abundant glutamine. Involved in nitrogen metabolism via ammonium assimilation. Catalyzes the ATP-dependent biosynthesis of glutamine from glutamate and ammonia. This Phormidium lapideum protein is Glutamine synthetase.